Consider the following 172-residue polypeptide: S-ribosylhomocysteine lyase (172 aa).

Residues His-54, His-58, and Cys-128 each coordinate Fe cation.

Belongs to the LuxS family. Homodimer. Fe cation is required as a cofactor.

The catalysed reaction is S-(5-deoxy-D-ribos-5-yl)-L-homocysteine = (S)-4,5-dihydroxypentane-2,3-dione + L-homocysteine. Its function is as follows. Involved in the synthesis of autoinducer 2 (AI-2) which is secreted by bacteria and is used to communicate both the cell density and the metabolic potential of the environment. The regulation of gene expression in response to changes in cell density is called quorum sensing. Catalyzes the transformation of S-ribosylhomocysteine (RHC) to homocysteine (HC) and 4,5-dihydroxy-2,3-pentadione (DPD). The sequence is that of S-ribosylhomocysteine lyase from Vibrio vulnificus (strain CMCP6).